The following is a 392-amino-acid chain: MKELLANRVKTLTPSTTLAITAKAKEMKAQGIDVIGLGAGEPDFNTPQNIMDAAIDSMQQGYTKYTPSGGLPALKQAIIEKFKRDNQLEYKPNEIIVGVGAKHVLYTLFQVILNEGDEVIIPIPYWVSYPEQVKLAGGVPVYIEATSEQNYKITAEQLKNAITDKTKAVIINSPSNPTGMVYTREELEDIAKIALENNILIVSDEIYEKLLYNGAEHFSIAQISEEVKAQTIVINGVSKSHSMTGWRIGYAAGNADIINAMTDLASHSTSNPTTASQYAAIEAYNGPQDSVEEMRKAFESRLETIYPKLSAIPGFKVVKPQGAFYLLPDVSEAAQKTGFASVDEFASALLTEANVAVIPGSGFGAPSTIRISYATSLNLIEEAIERIDRFVK.

L-aspartate contacts are provided by glycine 40, tryptophan 126, and asparagine 176. Lysine 239 is modified (N6-(pyridoxal phosphate)lysine).

It belongs to the class-I pyridoxal-phosphate-dependent aminotransferase family. In terms of assembly, homodimer. Pyridoxal 5'-phosphate serves as cofactor.

Its subcellular location is the cytoplasm. It catalyses the reaction L-aspartate + 2-oxoglutarate = oxaloacetate + L-glutamate. In Bacillus sp. (strain YM-2), this protein is Aspartate aminotransferase.